The sequence spans 631 residues: Glutamyl-tRNA(Gln) amidotransferase subunit E (631 aa).

Belongs to the GatB/GatE family. GatE subfamily. As to quaternary structure, heterodimer of GatD and GatE.

It carries out the reaction L-glutamyl-tRNA(Gln) + L-glutamine + ATP + H2O = L-glutaminyl-tRNA(Gln) + L-glutamate + ADP + phosphate + H(+). Its function is as follows. Allows the formation of correctly charged Gln-tRNA(Gln) through the transamidation of misacylated Glu-tRNA(Gln) in organisms which lack glutaminyl-tRNA synthetase. The reaction takes place in the presence of glutamine and ATP through an activated gamma-phospho-Glu-tRNA(Gln). The GatDE system is specific for glutamate and does not act on aspartate. This Methanococcus maripaludis (strain C5 / ATCC BAA-1333) protein is Glutamyl-tRNA(Gln) amidotransferase subunit E.